The sequence spans 249 residues: Small ribosomal subunit protein eS6 (249 aa).

The segment covering 223–238 has biased composition (basic residues); it reads LRQRDHSKKHTQKVHA. The interval 223–249 is disordered; sequence LRQRDHSKKHTQKVHAQRAEVAAFQKK.

This sequence belongs to the eukaryotic ribosomal protein eS6 family. As to quaternary structure, component of the small ribosomal subunit. Part of the small subunit (SSU) processome, composed of more than 70 proteins and the RNA chaperone small nucleolar RNA (snoRNA) U3. Ribosomal protein S6 is the major substrate of protein kinases in eukaryote ribosomes.

It is found in the cytoplasm. It localises to the nucleus. The protein resides in the nucleolus. In terms of biological role, component of the 40S small ribosomal subunit. Plays an important role in controlling cell growth and proliferation through the selective translation of particular classes of mRNA. Part of the small subunit (SSU) processome, first precursor of the small eukaryotic ribosomal subunit. During the assembly of the SSU processome in the nucleolus, many ribosome biogenesis factors, an RNA chaperone and ribosomal proteins associate with the nascent pre-rRNA and work in concert to generate RNA folding, modifications, rearrangements and cleavage as well as targeted degradation of pre-ribosomal RNA by the RNA exosome. This Leishmania infantum protein is Small ribosomal subunit protein eS6 (RPS6).